Reading from the N-terminus, the 514-residue chain is RNA-binding region-containing protein 3 (514 aa).

Residues 1–26 (MAGPEPPMPLSRGGPGSASLSPPRGD) form a disordered region. Residue serine 21 is modified to Phosphoserine. The RRM 1 domain maps to 27-102 (RTLLVRHLPA…HTLVVEFAKE (76 aa)). Disordered regions lie at residues 106-133 (VHSP…EKKE), 213-282 (MPLH…VRKK), and 337-363 (ETQP…FGKI). Serine 108 carries the phosphoserine modification. A compositionally biased stretch (basic and acidic residues) spans 115-133 (TEKKKRLDDTVENDKEKKE). Residues 217-230 (APLPPTSPQPPEEP) show a composition bias toward pro residues. Serine 349 carries the phosphoserine modification. The region spanning 418–501 (CRIYVKNLAR…KPMVVQFARS (84 aa)) is the RRM 2 domain.

In terms of assembly, component of the U11/U12 snRNPs that are part of the U12-type spliceosome. Found in a complex with m(7)G-capped U12 snRNA. Interacts with PDCD7.

It localises to the nucleus. In terms of biological role, participates in pre-mRNA U12-dependent splicing, performed by the minor spliceosome which removes U12-type introns. U12-type introns comprises less than 1% of all non-coding sequences. Binds to the 3'-stem-loop of m(7)G-capped U12 snRNA. The chain is RNA-binding region-containing protein 3 (Rnpc3) from Mus musculus (Mouse).